A 160-amino-acid polypeptide reads, in one-letter code: MTSALTHLGAQGEANMVDVGDKEETTRTAIAEGFVSMQPETLKTILAGNAKKGDVLGTARIAGIMAAKKTHELIPLCHPLLLTKISVDIEPDHALPGLKVTALARVTGKTGVEMEALTAASVACLTIYDMAKAVDRAMLISGIRLVEKTGGKSGDYKVGA.

Residues Leu-76–His-78 and Met-114–Glu-115 contribute to the substrate site. The active site involves Asp-129.

It belongs to the MoaC family. Homohexamer; trimer of dimers.

The catalysed reaction is (8S)-3',8-cyclo-7,8-dihydroguanosine 5'-triphosphate = cyclic pyranopterin phosphate + diphosphate. The protein operates within cofactor biosynthesis; molybdopterin biosynthesis. Catalyzes the conversion of (8S)-3',8-cyclo-7,8-dihydroguanosine 5'-triphosphate to cyclic pyranopterin monophosphate (cPMP). The polypeptide is Cyclic pyranopterin monophosphate synthase (Mesorhizobium japonicum (strain LMG 29417 / CECT 9101 / MAFF 303099) (Mesorhizobium loti (strain MAFF 303099))).